Reading from the N-terminus, the 1222-residue chain is MLFNINEKGEPLVISFAPFLSPEAIKHLQENERYSDQSQKRTAQQIEAIYTSGQNILVSASAGSGKTFVMVERILDKILRGVSIDRLFISTFTVKAATELRERIENKLYSQIAQTTDFQMKVYLTEQLQSLCQADIGTMDAFAQKVVSRYGYSIGISSQFRIMQDKAEQDVLKQEVFSKLFSEFMNQKEAPAFRALVKNFSGNCKDTSAFRELVYTCYSFSQSTENPKIWLQENFLSAAKTYQRLEDIPDHDIELLLLAMQDTANQLRDVTDMEDYGQLTKAGSRSAKYTKHLTIIEKLSDWVRDFKCLYGKAGLDRLIRDVTDLIPSGNDVTVSKVKYPVFKTLHQKLKQFRHLETILMYQKDCFPLLEQLQDFVFAFSEAYLAVKIQESAFEFSDIAHFAIKILEENTDIRQSYQQHYHEVMVDEYQDNNHMQERLLTLLSNGHNRFMVGDIKQSIYRFRQADPQIFNQKFRDYQKKPEQGKVILLKENFRSQSEVLNVSNAVFSHLMDESVGDVLYDEQHQLIAGSHAQTVPYLDRRAQLLLYNSDKDDGNAPSDSEGISFSEVTIVAKEIIKLHNDKGVPFEDITLLVSSRTRNDIISHTFNQYGIPIVTDGGQQNYLKSVEVMVMLDTLRTINNPRNDYALVALLRSPMFAFDEDDLARIALQKDNELDKDCLYDKMQRAVIGRGAHPELIHDTLLGKLNVFLKTLKSWRRYAKLGSLYDLIWKIFNDRFYFDFVASQAKAEQAQANLYALALRANQFEKSGYKGLYRFIKMIDKVLETQNDLADVEVAAPKQAVNLMTIHKSKGLQFPYVFILNCDKRFSMTDIHKSFILNRQHGIGIKYLADIKGLLGETTLNSVKVSMETLPYQLNKQELRLATLSEQMRLLYVAMTRAEKKVYFIGKASKSKSQEITDPKKLGKLLPLALREQLLTFQDWLLAIADIFSTEDLYFDVRFIEDSDLTQESVGRLQTPQLLNPDDLKDNRQSETIARALDMLEAVSQLNANYEAAIHLPTVRTPSQLKAAYEPLLEPIGVDIIEKSSRSLSDFTLPHFSKKAKVEASHIGSALHQLMQVLPLSKPINQQTLLDALRGIDSNEEVKTALDLKKIESFFCDTSLGQFFQTYQKHLYREAPFAILKVDPISQEEYVLRGIIDAYFLFDDHIVLVDYKTDKYKQPIELKKRYQQQLELYAEALTQTYKLPVTKRYLVLMGGGKPEIVEV.

The UvrD-like helicase ATP-binding domain occupies 39-495 (QKRTAQQIEA…ILLKENFRSQ (457 aa)). An ATP-binding site is contributed by 60–67 (ASAGSGKT). Residues 524–810 (QLIAGSHAQT…NLMTIHKSKG (287 aa)) enclose the UvrD-like helicase C-terminal domain.

Belongs to the helicase family. AddA subfamily. In terms of assembly, heterodimer of AddA and AddB/RexB. It depends on Mg(2+) as a cofactor.

It catalyses the reaction Couples ATP hydrolysis with the unwinding of duplex DNA by translocating in the 3'-5' direction.. The catalysed reaction is ATP + H2O = ADP + phosphate + H(+). The heterodimer acts as both an ATP-dependent DNA helicase and an ATP-dependent, dual-direction single-stranded exonuclease. Recognizes the chi site generating a DNA molecule suitable for the initiation of homologous recombination. The AddA nuclease domain is required for chi fragment generation; this subunit has the helicase and 3' -&gt; 5' nuclease activities. This Streptococcus pyogenes serotype M3 (strain ATCC BAA-595 / MGAS315) protein is ATP-dependent helicase/nuclease subunit A.